The following is a 1050-amino-acid chain: Probable beta-glucosidase E (1050 aa).

The segment at 1 to 87 (MPPPDSNPGS…RSSSTNGGHN (87 aa)) is disordered. The Cytoplasmic portion of the chain corresponds to 1-174 (MPPPDSNPGS…VKYARIWRRT (174 aa)). Residues 11 to 20 (FRDHLKHDNK) are compositionally biased toward basic and acidic residues. The segment covering 47–56 (SPRSASASSS) has biased composition (low complexity). Residues 78–87 (RSSSTNGGHN) show a composition bias toward polar residues. Residues 175–195 (LVVVIVALALLVWGFLRFTAA) form a helical; Signal-anchor for type II membrane protein membrane-spanning segment. Residues 196–1050 (QRQGPKVWPM…SRDLPLQAKY (855 aa)) are Extracellular-facing. N-linked (GlcNAc...) asparagine glycosylation is found at asparagine 236, asparagine 244, asparagine 300, and asparagine 430. The active site involves aspartate 458. Asparagine 501, asparagine 540, asparagine 605, asparagine 884, asparagine 920, asparagine 929, and asparagine 993 each carry an N-linked (GlcNAc...) asparagine glycan.

This sequence belongs to the glycosyl hydrolase 3 family.

It localises to the cell membrane. It carries out the reaction Hydrolysis of terminal, non-reducing beta-D-glucosyl residues with release of beta-D-glucose.. The protein operates within glycan metabolism; cellulose degradation. In terms of biological role, beta-glucosidases are one of a number of cellulolytic enzymes involved in the degradation of cellulosic biomass. Catalyzes the last step releasing glucose from the inhibitory cellobiose. This chain is Probable beta-glucosidase E (bglE), found in Aspergillus clavatus (strain ATCC 1007 / CBS 513.65 / DSM 816 / NCTC 3887 / NRRL 1 / QM 1276 / 107).